A 413-amino-acid polypeptide reads, in one-letter code: Cis,cis-muconate transport protein (413 aa).

Over 1–16 (MYSNNQRSRIGSHTWK) the chain is Cytoplasmic. Residues 17-37 (IAFLFAFLALLVDGADLMLLS) form a helical membrane-spanning segment. At 38–53 (YSLNSIKAEFNLSTVE) the chain is on the periplasmic side. The chain crosses the membrane as a helical span at residues 54–74 (AGMLGSFTLAGMAIGGIFGGW). At 75-85 (ACDRFGRVRIV) the chain is on the cytoplasmic side. The helical transmembrane segment at 86–106 (VISILTFSILTCGLGLTQSFI) threads the bilayer. Residues 107–112 (QFGVLR) are Periplasmic-facing. The helical transmembrane segment at 113-133 (FFASLGLGSLYIACNTLMAEY) threads the bilayer. Over 134–145 (VPTKYRTTVLGT) the chain is Cytoplasmic. A helical membrane pass occupies residues 146 to 166 (LQAGWTVGYIVATLLAGWLIP). Residues 167-171 (DHGWR) lie on the Periplasmic side of the membrane. The chain crosses the membrane as a helical span at residues 172–192 (VLFYVAIIPVLMAVLMHFFVP). Over 193 to 228 (EPAAWQQSRLAPSKQTETVKTSAFKLIFQDKRNRNM) the chain is Cytoplasmic. A helical membrane pass occupies residues 229 to 249 (FILWALTAGFLQFGYYGVNNW). Over 250–266 (MPSYLESELGMKFKEMT) the chain is Periplasmic. Residues 267–287 (AYMVGTYTAMILGKILAGFMA) form a helical membrane-spanning segment. At 288–293 (DKLGRR) the chain is on the cytoplasmic side. The chain crosses the membrane as a helical span at residues 294 to 314 (FTYAFGAIGTAIFLPLIVFYN). The Periplasmic segment spans residues 315–318 (SPDN). Residues 319–339 (ILYLLVIFGFLYGIPYGVNAT) traverse the membrane as a helical segment. Topologically, residues 340–352 (YMTESFPTAIRGT) are cytoplasmic. A helical transmembrane segment spans residues 353 to 376 (AIGGAYNVGRLGAAIAPATIGFLA). Over 377 to 382 (SGGSIG) the chain is Periplasmic. The helical transmembrane segment at 383-403 (LGFVVMGAAYFICGVIPALFI) threads the bilayer. Residues 404-413 (KEKQYDPQQS) lie on the Cytoplasmic side of the membrane.

Belongs to the major facilitator superfamily. Aromatic acid:H(+) symporter (AAHS) (TC 2.A.1.15) family.

The protein resides in the cell inner membrane. Functionally, probable uptake of muconate. This is Cis,cis-muconate transport protein (mucK) from Acinetobacter baylyi (strain ATCC 33305 / BD413 / ADP1).